A 212-amino-acid polypeptide reads, in one-letter code: Ion-translocating oxidoreductase complex subunit G (212 aa).

A helical transmembrane segment spans residues 9 to 29 (GFLLALFALICTGLVAAVNQQ). Thr-176 carries the FMN phosphoryl threonine modification.

Belongs to the RnfG family. In terms of assembly, the complex is composed of six subunits: RnfA, RnfB, RnfC, RnfD, RnfE and RnfG. Requires FMN as cofactor.

It is found in the cell inner membrane. Its function is as follows. Part of a membrane-bound complex that couples electron transfer with translocation of ions across the membrane. This chain is Ion-translocating oxidoreductase complex subunit G, found in Shewanella baltica (strain OS223).